We begin with the raw amino-acid sequence, 126 residues long: Protein mmf2, mitochondrial (126 aa).

Belongs to the RutC family.

The protein localises to the mitochondrion. The protein resides in the cytoplasm. Its function is as follows. Plays a role in the maintenance of mitochondrial DNA. This Schizosaccharomyces pombe (strain 972 / ATCC 24843) (Fission yeast) protein is Protein mmf2, mitochondrial (mmf2).